Reading from the N-terminus, the 130-residue chain is Phosphomevalonate dehydratase small subunit (130 aa).

The active-site Proton acceptor is Ser62.

This sequence belongs to the AcnX type II small subunit family. In terms of assembly, heterodimer composed of a large subunit (PMDh-L) and a small subunit (PMDh-S).

The catalysed reaction is (R)-5-phosphomevalonate = (2E)-3-methyl-5-phosphooxypent-2-enoate + H2O. It functions in the pathway isoprenoid biosynthesis; isopentenyl diphosphate biosynthesis via mevalonate pathway. In terms of biological role, component of a hydro-lyase that catalyzes the dehydration of mevalonate 5-phosphate (MVA5P) to form trans-anhydromevalonate 5-phosphate (tAHMP). Involved in the archaeal mevalonate (MVA) pathway, which provides fundamental precursors for isoprenoid biosynthesis, such as isopentenyl diphosphate (IPP) and dimethylallyl diphosphate (DMAPP). The polypeptide is Phosphomevalonate dehydratase small subunit (Pyrococcus abyssi (strain GE5 / Orsay)).